Reading from the N-terminus, the 238-residue chain is Ribonuclease PH (238 aa).

Phosphate-binding positions include R86 and 124-126 (GTR).

It belongs to the RNase PH family. Homohexameric ring arranged as a trimer of dimers.

It carries out the reaction tRNA(n+1) + phosphate = tRNA(n) + a ribonucleoside 5'-diphosphate. Functionally, phosphorolytic 3'-5' exoribonuclease that plays an important role in tRNA 3'-end maturation. Removes nucleotide residues following the 3'-CCA terminus of tRNAs; can also add nucleotides to the ends of RNA molecules by using nucleoside diphosphates as substrates, but this may not be physiologically important. Probably plays a role in initiation of 16S rRNA degradation (leading to ribosome degradation) during starvation. The chain is Ribonuclease PH from Brucella anthropi (strain ATCC 49188 / DSM 6882 / CCUG 24695 / JCM 21032 / LMG 3331 / NBRC 15819 / NCTC 12168 / Alc 37) (Ochrobactrum anthropi).